The following is a 433-amino-acid chain: Protein root UVB sensitive 2, chloroplastic (433 aa).

Belongs to the RUS1 family. As to quaternary structure, interacts (via the DUF647 domain) with RUS1 (via the DUF647 domain). As to expression, expressed throughout the plant, with a higher expression near the root apical meristem, in the cortex region of the root elongation zone, in lateral roots and emerging lateral roots. Not detected in extreme root apical meristem or root cap.

The protein resides in the plastid. Functionally, involved in a root UV-B sensing pathway and in the protection against the hypersensitivity to very low-fluence-rate (VLF) UV-B. RSU1 and RUS2 are probably both negative modulators of the same UV-B perception pathway, which when overstimulated in the roots causes a block to postgermination development. Required for polar auxin transport and to maintain the normal levels of PIN proteins in the root. The sequence is that of Protein root UVB sensitive 2, chloroplastic from Arabidopsis thaliana (Mouse-ear cress).